Here is a 360-residue protein sequence, read N- to C-terminus: Phenylalanine--tRNA ligase alpha subunit (360 aa).

Residue Glu260 coordinates Mg(2+).

This sequence belongs to the class-II aminoacyl-tRNA synthetase family. Phe-tRNA synthetase alpha subunit type 1 subfamily. As to quaternary structure, tetramer of two alpha and two beta subunits. It depends on Mg(2+) as a cofactor.

It is found in the cytoplasm. The catalysed reaction is tRNA(Phe) + L-phenylalanine + ATP = L-phenylalanyl-tRNA(Phe) + AMP + diphosphate + H(+). The sequence is that of Phenylalanine--tRNA ligase alpha subunit from Bradyrhizobium sp. (strain ORS 278).